A 960-amino-acid chain; its full sequence is Cyclin-dependent kinase-like 5 (960 aa).

The Protein kinase domain maps to 13–297 (FEILGVVGEG…TEQCLNHPTF (285 aa)). ATP-binding positions include 19-27 (VGEGAYGVV) and K42. The Proton acceptor role is filled by D135. Disordered stretches follow at residues 300-349 (QRLL…IQNL), 382-566 (KTYQ…RHSK), 646-834 (SPQP…TQSQ), and 848-960 (ASNH…ETAL). Composition is skewed to polar residues over residues 319-336 (ESSTLSNRNQAGKSTALQ) and 382-402 (KTYQASSQPGSTSKDLTNNNI). S407 is modified (phosphoserine). Basic and acidic residues predominate over residues 407–417 (SPKEAKSKTEF). Composition is skewed to polar residues over residues 434 to 462 (LKSNSRSQQNRHSFMESSQSKAGTLQPNE), 473 to 482 (IPQSSRSPSY), and 510 to 548 (EPSTSRYFPSSCLDLNSPTSPTPTRHSDTRTLLSPSGRN). S479 is modified (phosphoserine). Composition is skewed to basic and acidic residues over residues 549–559 (NRNEGTLDSRR) and 679–704 (QKSEGGVYHDPHSDDGTAPKENRHLY). S720 is modified (phosphoserine). A compositionally biased stretch (polar residues) spans 728 to 748 (HENNVSTRVSSLPSESSSGTN). S761 bears the Phosphoserine mark. Residues 769 to 778 (EQLKEKEKQG) are compositionally biased toward basic and acidic residues. A compositionally biased stretch (polar residues) spans 791–816 (QTVPNSDSPDLLTLQKSIHSASTPSS). Residues 817–827 (RPKEWRPEKIS) show a composition bias toward basic and acidic residues. Polar residues-rich tracts occupy residues 862-872 (LTAQQTKNSFS), 880-890 (SQASGGSSNIR), and 914-928 (SSVTRSATEGPSYSE).

This sequence belongs to the protein kinase superfamily. CMGC Ser/Thr protein kinase family. CDC2/CDKX subfamily. As to quaternary structure, interacts with MECP2. In terms of processing, autophosphorylated. As to expression, expressed in brain, lung, kidney, prostate, ovary, placenta, pancreas and testis. Predominant transcript in brain.

The protein localises to the nucleus. It localises to the cytoplasm. The protein resides in the cytoskeleton. Its subcellular location is the cilium basal body. It is found in the microtubule organizing center. The protein localises to the centrosome. It carries out the reaction L-seryl-[protein] + ATP = O-phospho-L-seryl-[protein] + ADP + H(+). The enzyme catalyses L-threonyl-[protein] + ATP = O-phospho-L-threonyl-[protein] + ADP + H(+). Functionally, mediates phosphorylation of MECP2. May regulate ciliogenesis. The sequence is that of Cyclin-dependent kinase-like 5 from Homo sapiens (Human).